Here is a 300-residue protein sequence, read N- to C-terminus: Fe(3+) dicitrate-binding periplasmic protein FecB (300 aa).

Residues Met-1–Ala-21 form the signal peptide. Residues Arg-39–Pro-295 form the Fe/B12 periplasmic-binding domain.

It belongs to the bacterial solute-binding protein 8 family. The complex is composed of two ATP-binding proteins (FecE), two transmembrane proteins (FecC and FecD) and a solute-binding protein (FecB). Interacts with FecC and FecD.

It is found in the periplasm. Part of the ABC transporter complex FecBCDE involved in citrate-dependent Fe(3+) uptake. Binds both iron-free and iron-loaded citrate although it binds iron-loaded citrate with a higher affinity. Binds different forms of Fe(3+)-citrate as well as citrate complexed with various representative Fe(3+)-mimics (Ga(3+), Al(3+), Sc(3+) and In(3+)) and a representative divalent metal ion (Mg(2+)). Can also bind various tricarboxylates in iron-free and iron-loaded form. The protein is Fe(3+) dicitrate-binding periplasmic protein FecB of Escherichia coli (strain K12).